Consider the following 816-residue polypeptide: Leucine--tRNA ligase (816 aa).

The 'HIGH' region signature appears at 46–56 (PYPSGALHMGH). A 'KMSKS' region motif is present at residues 638 to 642 (KMSKS). Position 641 (lysine 641) interacts with ATP.

This sequence belongs to the class-I aminoacyl-tRNA synthetase family.

It localises to the cytoplasm. It carries out the reaction tRNA(Leu) + L-leucine + ATP = L-leucyl-tRNA(Leu) + AMP + diphosphate. The polypeptide is Leucine--tRNA ligase (Xanthomonas campestris pv. campestris (strain ATCC 33913 / DSM 3586 / NCPPB 528 / LMG 568 / P 25)).